Consider the following 157-residue polypeptide: MSKVKNIAVVAHDNCKKELLDFVDCNHNILSRHNLVATGTTGGLVEKMIMERVEQKADEGYEFKPVNRMKSGPLGGDQQLGAMISEGKIDVLIFFWDPMQPQPHDVDVKALLRLAVLYNIPTASNRSTAEFLISSPFFEGEFQRKETDFSSYTQRKL.

An MGS-like domain is found at methionine 1–leucine 157. Substrate-binding positions include histidine 12, lysine 16, threonine 38–threonine 41, and serine 71–glycine 72. Residue aspartate 77 is the Proton donor/acceptor of the active site. Substrate is bound at residue histidine 104.

It belongs to the methylglyoxal synthase family.

It carries out the reaction dihydroxyacetone phosphate = methylglyoxal + phosphate. Its function is as follows. Catalyzes the formation of methylglyoxal from dihydroxyacetone phosphate. In Maridesulfovibrio salexigens (strain ATCC 14822 / DSM 2638 / NCIMB 8403 / VKM B-1763) (Desulfovibrio salexigens), this protein is Methylglyoxal synthase.